Reading from the N-terminus, the 190-residue chain is Elongation factor P 2 (190 aa).

It belongs to the elongation factor P family.

The protein resides in the cytoplasm. The protein operates within protein biosynthesis; polypeptide chain elongation. Functionally, involved in peptide bond synthesis. Stimulates efficient translation and peptide-bond synthesis on native or reconstituted 70S ribosomes in vitro. Probably functions indirectly by altering the affinity of the ribosome for aminoacyl-tRNA, thus increasing their reactivity as acceptors for peptidyl transferase. In Protochlamydia amoebophila (strain UWE25), this protein is Elongation factor P 2 (efp2).